Here is a 348-residue protein sequence, read N- to C-terminus: Bifunctional nitrilase/nitrile hydratase NIT4B (348 aa).

The CN hydrolase domain occupies 29 to 300 (VRATVVQAST…EALISADLDL (272 aa)). The active-site Proton acceptor is Glu-69. Lys-156 serves as the catalytic Proton donor. Residue Cys-190 is the Nucleophile of the active site.

The protein belongs to the carbon-nitrogen hydrolase superfamily. Nitrilase family. Expressed in roots, stems, cotyledons, leaves and flowers.

The enzyme catalyses a nitrile + 2 H2O = a carboxylate + NH4(+). The catalysed reaction is 3-cyano-L-alanine + 2 H2O = L-aspartate + NH4(+). In terms of biological role, highly specific for beta-cyano-L-alanine (Ala(CN)). Low activity with 3-phenylpropionitrile (PPN). Not associated with auxin production but may be involved in cyanide detoxification. This is Bifunctional nitrilase/nitrile hydratase NIT4B (NIT4B) from Nicotiana tabacum (Common tobacco).